A 143-amino-acid chain; its full sequence is Transcriptional regulator MraZ (143 aa).

2 SpoVT-AbrB domains span residues 5 to 47 (EYKH…SLKE) and 76 to 119 (ACEC…SENN).

The protein belongs to the MraZ family. Forms oligomers.

It localises to the cytoplasm. Its subcellular location is the nucleoid. The chain is Transcriptional regulator MraZ from Caldicellulosiruptor bescii (strain ATCC BAA-1888 / DSM 6725 / KCTC 15123 / Z-1320) (Anaerocellum thermophilum).